Here is an 882-residue protein sequence, read N- to C-terminus: DNA mismatch repair protein MutS (882 aa).

An ATP-binding site is contributed by 640-647 (GPNMGGKS).

The protein belongs to the DNA mismatch repair MutS family.

In terms of biological role, this protein is involved in the repair of mismatches in DNA. It is possible that it carries out the mismatch recognition step. This protein has a weak ATPase activity. The chain is DNA mismatch repair protein MutS from Albidiferax ferrireducens (strain ATCC BAA-621 / DSM 15236 / T118) (Rhodoferax ferrireducens).